We begin with the raw amino-acid sequence, 407 residues long: Queuine tRNA-ribosyltransferase-like protein (407 aa).

Belongs to the queuine tRNA-ribosyltransferase family.

The polypeptide is Queuine tRNA-ribosyltransferase-like protein (Plasmodium falciparum (isolate 3D7)).